The following is a 232-amino-acid chain: Ribose-5-phosphate isomerase A (232 aa).

Substrate is bound by residues 31–34, 87–90, and 100–103; these read TGST, DGAD, and KGGG. The Proton acceptor role is filled by Glu109. Lys127 serves as a coordination point for substrate.

It belongs to the ribose 5-phosphate isomerase family. As to quaternary structure, homodimer.

It carries out the reaction aldehydo-D-ribose 5-phosphate = D-ribulose 5-phosphate. Its pathway is carbohydrate degradation; pentose phosphate pathway; D-ribose 5-phosphate from D-ribulose 5-phosphate (non-oxidative stage): step 1/1. In terms of biological role, catalyzes the reversible conversion of ribose-5-phosphate to ribulose 5-phosphate. In Bifidobacterium longum (strain NCC 2705), this protein is Ribose-5-phosphate isomerase A.